The following is a 561-amino-acid chain: GPI mannosyltransferase 3 (561 aa).

8 helical membrane-spanning segments follow: residues 3 to 25 (LIYVFLLILAVRLASVFVVQTYY), 64 to 84 (IAGLYKILALLQLDSAHLLVV), 110 to 130 (WALFLILVPWFWFYTGSRTLA), 155 to 175 (LWPAAICCFLRPTAAVIWLPL), 195 to 215 (FVLIGLLVAGLGIAIDTYWHG), 246 to 266 (FSVGLPTVLGINTLPFIFGVM), 275 to 295 (YPVSKQLLITIFLTLVVLSAV), and 328 to 348 (TMLWTTALVILVGNVMPAWYL). Residues N398 and N456 are each glycosylated (N-linked (GlcNAc...) asparagine). The tract at residues 525–546 (ENAFNRGPDSGQHEPDVHDHPP) is disordered. The span at 535–546 (GQHEPDVHDHPP) shows a compositional bias: basic and acidic residues.

It belongs to the glycosyltransferase 22 family. PIGB subfamily.

Its subcellular location is the endoplasmic reticulum membrane. It participates in glycolipid biosynthesis; glycosylphosphatidylinositol-anchor biosynthesis. Mannosyltransferase involved in glycosylphosphatidylinositol-anchor biosynthesis. Transfers the third alpha-1,2-mannose to Man2-GlcN-acyl-PI during GPI precursor assembly. This Drosophila melanogaster (Fruit fly) protein is GPI mannosyltransferase 3.